The primary structure comprises 53 residues: Ovomucoid (53 aa).

One can recognise a Kazal-like domain in the interval 3-53; it reads VDCSEYPKPGCMMERLPLCGSDNKTYNDKCNFCNAVVESNGTLTLNHFGEC. Cystine bridges form between Cys-5–Cys-35, Cys-13–Cys-32, and Cys-21–Cys-53. Asn-42 carries N-linked (GlcNAc...) asparagine glycosylation.

The protein localises to the secreted. This Turnix sylvaticus (Common buttonquail) protein is Ovomucoid.